Consider the following 539-residue polypeptide: Phosphoenolpyruvate carboxykinase (ATP) (539 aa).

Substrate contacts are provided by R64, Y206, and K212. ATP contacts are provided by residues K212, H231, and 247–255 (GLSGTGKTT). Mn(2+) contacts are provided by K212 and H231. D268 provides a ligand contact to Mn(2+). ATP contacts are provided by residues E296, R332, 448–449 (RI), and T454. R332 is a substrate binding site.

The protein belongs to the phosphoenolpyruvate carboxykinase (ATP) family. In terms of assembly, monomer. The cofactor is Mn(2+).

It is found in the cytoplasm. The catalysed reaction is oxaloacetate + ATP = phosphoenolpyruvate + ADP + CO2. It participates in carbohydrate biosynthesis; gluconeogenesis. In terms of biological role, involved in the gluconeogenesis. Catalyzes the conversion of oxaloacetate (OAA) to phosphoenolpyruvate (PEP) through direct phosphoryl transfer between the nucleoside triphosphate and OAA. The chain is Phosphoenolpyruvate carboxykinase (ATP) from Yersinia pseudotuberculosis serotype O:1b (strain IP 31758).